A 1006-amino-acid chain; its full sequence is Transcription factor tau subunit sfc4 (1006 aa).

Positions 64–91 are disordered; it reads GLWSDEESDYEGSDDESNFSKTASRTED. Acidic residues predominate over residues 66-80; it reads WSDEESDYEGSDDES. TPR repeat units lie at residues 133-166, 205-238, 277-310, 396-429, 431-464, and 466-499; these read QQML…DNNV, HELW…KPPN, ASIL…FYQY, HLFR…PPDY, WGML…EPAQ, and IGLW…DNSN. A coiled-coil region spans residues 506 to 554; that stretch reads LAEINELQDNRDAALEIVTNIFEQRRNINELEREQSQNEDHEKNVGSQL. TPR repeat units lie at residues 841-874 and 924-957; these read PVLV…NPDC and QEAL…SPMS.

As to quaternary structure, component of the TFIIIC complex including sfc1, sfc3, sfc4, sfc6 and sfc7. The subunits are organized in two globular domains, tauA and tauB, connected by a proteolysis-sensitive and flexible linker. Interacts with sfc1, sfc3 and sfc6. Phosphorylated.

The protein resides in the nucleus. Functionally, TFIIIC mediates tRNA and 5S RNA gene activation by binding to intragenic promoter elements. Upstream of the transcription start site, TFIIIC assembles the initiation complex TFIIIB-TFIIIC-tDNA, which is sufficient for RNA polymerase III recruitment and function. Part of the tauA domain of TFIIIC that binds boxA DNA promoter sites of tRNA and similar genes. Sfc4 is the TFIIIB assembling subunit of TFIIIC. The chain is Transcription factor tau subunit sfc4 from Schizosaccharomyces pombe (strain 972 / ATCC 24843) (Fission yeast).